Consider the following 371-residue polypeptide: Cytochrome b (371 aa).

4 consecutive transmembrane segments (helical) span residues 25 to 45 (FGSM…FLAV), 69 to 90 (WMMQ…YIHI), 105 to 125 (WMSG…GYVL), and 170 to 190 (FFAL…LHII). Heme b contacts are provided by His75 and His89. Heme b is bound by residues His174 and His188. His193 is an a ubiquinone binding site. Transmembrane regions (helical) follow at residues 218–238 (HKDL…VSFS), 280–300 (LGGA…PFTH), 312–332 (LSQL…WAAT), and 339–358 (FIII…LSIP).

Belongs to the cytochrome b family. In terms of assembly, the cytochrome bc1 complex contains 3 respiratory subunits (MT-CYB, CYC1 and UQCRFS1), 2 core proteins (UQCRC1 and UQCRC2) and probably 6 low-molecular weight proteins. Heme b is required as a cofactor.

The protein localises to the mitochondrion inner membrane. In terms of biological role, component of the ubiquinol-cytochrome c reductase complex (complex III or cytochrome b-c1 complex) that is part of the mitochondrial respiratory chain. The b-c1 complex mediates electron transfer from ubiquinol to cytochrome c. Contributes to the generation of a proton gradient across the mitochondrial membrane that is then used for ATP synthesis. The protein is Cytochrome b (MT-CYB) of Antaresia childreni (Children's python).